The following is a 499-amino-acid chain: L-arabinose isomerase (499 aa).

Residues Glu306, Glu333, His350, and His449 each coordinate Mn(2+).

Belongs to the arabinose isomerase family. It depends on Mn(2+) as a cofactor.

The catalysed reaction is beta-L-arabinopyranose = L-ribulose. Its pathway is carbohydrate degradation; L-arabinose degradation via L-ribulose; D-xylulose 5-phosphate from L-arabinose (bacterial route): step 1/3. Catalyzes the conversion of L-arabinose to L-ribulose. In Tolumonas auensis (strain DSM 9187 / NBRC 110442 / TA 4), this protein is L-arabinose isomerase.